The chain runs to 194 residues: Imidazoleglycerol-phosphate dehydratase (194 aa).

The protein belongs to the imidazoleglycerol-phosphate dehydratase family.

It is found in the cytoplasm. The enzyme catalyses D-erythro-1-(imidazol-4-yl)glycerol 3-phosphate = 3-(imidazol-4-yl)-2-oxopropyl phosphate + H2O. The protein operates within amino-acid biosynthesis; L-histidine biosynthesis; L-histidine from 5-phospho-alpha-D-ribose 1-diphosphate: step 6/9. This chain is Imidazoleglycerol-phosphate dehydratase, found in Listeria monocytogenes serotype 4b (strain F2365).